A 367-amino-acid polypeptide reads, in one-letter code: tRNA-specific 2-thiouridylase MnmA (367 aa).

ATP is bound by residues 13–20 and methionine 39; that span reads GLSGGVDS. The tract at residues 99-101 is interaction with target base in tRNA; that stretch reads NPD. Cysteine 104 (nucleophile) is an active-site residue. An intrachain disulfide couples cysteine 104 to cysteine 200. Glycine 128 serves as a coordination point for ATP. The tract at residues 150–152 is interaction with tRNA; it reads KDQ. The active-site Cysteine persulfide intermediate is cysteine 200. Residues 307–308 are interaction with tRNA; it reads RY.

Belongs to the MnmA/TRMU family.

It is found in the cytoplasm. It carries out the reaction S-sulfanyl-L-cysteinyl-[protein] + uridine(34) in tRNA + AH2 + ATP = 2-thiouridine(34) in tRNA + L-cysteinyl-[protein] + A + AMP + diphosphate + H(+). Functionally, catalyzes the 2-thiolation of uridine at the wobble position (U34) of tRNA, leading to the formation of s(2)U34. The protein is tRNA-specific 2-thiouridylase MnmA of Neisseria meningitidis serogroup B (strain ATCC BAA-335 / MC58).